Consider the following 267-residue polypeptide: MRLTVLCAVCLLPGSLALPLPQEAGGMSELQWEQAQDYLKRFYLYDSETKNANSLEAKLKEMQKFFGLPITGMLNSRVIEIMQKPRCGVPDVAEYSLFPNSPKWTSKVVTYRIVSYTRDLPHITVDRLVSKALNMWGKEIPLHFRKVVWGTADIMIGFARGAHGDSYPFDGPGNTLAHAFAPGTGLGGDAHFDEDERWTDGSSLGINFLYAATHELGHSLGMGHSSDPNAVMYPTYGNGDPQNFKLSQDDIKGIQKLYGKRSNSRKK.

The N-terminal stretch at 1–17 (MRLTVLCAVCLLPGSLA) is a signal peptide. Positions 18–94 (LPLPQEAGGM…PRCGVPDVAE (77 aa)) are cleaved as a propeptide — activation peptide. A Cysteine switch motif is present at residues 85–92 (PRCGVPDV). Cys87 is a Zn(2+) binding site. A Ca(2+)-binding site is contributed by Asp153. Residues His163 and Asp165 each contribute to the Zn(2+) site. Ca(2+) is bound by residues Asp170, Gly171, Gly173, and Thr175. His178 serves as a coordination point for Zn(2+). Ca(2+) is bound by residues Gly185, Gly187, and Asp189. Zn(2+) is bound at residue His191. Asp193 and Glu196 together coordinate Ca(2+). His214 serves as a coordination point for Zn(2+). Glu215 is a catalytic residue. Zn(2+) is bound by residues His218 and His224.

The protein belongs to the peptidase M10A family. Requires Ca(2+) as cofactor. Zn(2+) serves as cofactor.

Its subcellular location is the secreted. It localises to the extracellular space. It is found in the extracellular matrix. It carries out the reaction Cleavage of 14-Ala-|-Leu-15 and 16-Tyr-|-Leu-17 in B chain of insulin. No action on collagen types I, II, IV, V. Cleaves gelatin chain alpha2(I) &gt; alpha1(I).. In terms of biological role, degrades casein, gelatins of types I, III, IV, and V, and fibronectin. Activates procollagenase. The sequence is that of Matrilysin (MMP7) from Homo sapiens (Human).